The primary structure comprises 232 residues: Large ribosomal subunit protein uL1 (232 aa).

The protein belongs to the universal ribosomal protein uL1 family. As to quaternary structure, part of the 50S ribosomal subunit.

In terms of biological role, binds directly to 23S rRNA. The L1 stalk is quite mobile in the ribosome, and is involved in E site tRNA release. Its function is as follows. Protein L1 is also a translational repressor protein, it controls the translation of the L11 operon by binding to its mRNA. This Thermosipho africanus (strain TCF52B) protein is Large ribosomal subunit protein uL1.